Here is a 428-residue protein sequence, read N- to C-terminus: MLTIYHFPQDEAALREQLNRTVSFDPDAQRTVDDILYRVRTEGDAAVLDYTERFQGIRLYDMRVPEAEIEAAYAAADPEFIAILEEAFANITAFHRNEAEKSFFYEQKGGVILGQRVTPMEKALLYVPGGKAAYPSSVLMNAAPAQVAGVDEISMTTPCDAEGKVNPHILAAAKVAGITSVYRLGGAQAVAAFAYGTATIPKVDIVTGPGNKYVALAKKQVFGHVAIDSIAGPSEVVVIADAGAEPEFIVMDMFAQAEHDPDASAVLITPSAELADAVRETAARLAGTMLRGEVITRALTDNGAIVVTGSMQEACKVSDMIAPEHLELHVDNPWEILPDLRHAGAIFMGQWSCETVGDYFAGPNHTLPTNGTARFFSPLSVRDFVKHTSIIAWSKSELARTGEKIARFADHEGLQAHAEAVRVRLKHL.

NAD(+) is bound by residues Tyr126, Gln188, and Asn211. Residues Ser234, Gln256, and His259 each contribute to the substrate site. Zn(2+) contacts are provided by Gln256 and His259. Active-site proton acceptor residues include Glu324 and His325. Substrate contacts are provided by His325, Asp358, Glu412, and His417. Position 358 (Asp358) interacts with Zn(2+). Zn(2+) is bound at residue His417.

This sequence belongs to the histidinol dehydrogenase family. It depends on Zn(2+) as a cofactor.

It carries out the reaction L-histidinol + 2 NAD(+) + H2O = L-histidine + 2 NADH + 3 H(+). The protein operates within amino-acid biosynthesis; L-histidine biosynthesis; L-histidine from 5-phospho-alpha-D-ribose 1-diphosphate: step 9/9. Functionally, catalyzes the sequential NAD-dependent oxidations of L-histidinol to L-histidinaldehyde and then to L-histidine. This is Histidinol dehydrogenase from Chlorobaculum tepidum (strain ATCC 49652 / DSM 12025 / NBRC 103806 / TLS) (Chlorobium tepidum).